We begin with the raw amino-acid sequence, 359 residues long: S-adenosylmethionine:tRNA ribosyltransferase-isomerase (359 aa).

It belongs to the QueA family. As to quaternary structure, monomer.

Its subcellular location is the cytoplasm. It catalyses the reaction 7-aminomethyl-7-carbaguanosine(34) in tRNA + S-adenosyl-L-methionine = epoxyqueuosine(34) in tRNA + adenine + L-methionine + 2 H(+). Its pathway is tRNA modification; tRNA-queuosine biosynthesis. Its function is as follows. Transfers and isomerizes the ribose moiety from AdoMet to the 7-aminomethyl group of 7-deazaguanine (preQ1-tRNA) to give epoxyqueuosine (oQ-tRNA). The polypeptide is S-adenosylmethionine:tRNA ribosyltransferase-isomerase (Synechococcus sp. (strain ATCC 27144 / PCC 6301 / SAUG 1402/1) (Anacystis nidulans)).